The sequence spans 274 residues: Large ribosomal subunit protein uL2cz/uL2cy (274 aa).

2 disordered regions span residues 1 to 22 (MAIHLYKTSTPSTRNGAVDSQV) and 223 to 274 (MNPV…RRTK).

This sequence belongs to the universal ribosomal protein uL2 family. In terms of assembly, part of the 50S ribosomal subunit.

The protein localises to the plastid. The protein resides in the chloroplast. This is Large ribosomal subunit protein uL2cz/uL2cy (rpl2-A) from Phaseolus vulgaris (Kidney bean).